Here is a 121-residue protein sequence, read N- to C-terminus: MARIAGIDIPREKRVVISLTYIYGVGKSTAAKILEEANVSPDTRVKDLTDDELGRIRETVDAYKVEGDLRREQNLNIKRLMEISSYRGIRHRRGLPVRGQKTKNNARTRKGPVKTVANKKK.

The tract at residues 91–121 is disordered; that stretch reads HRRGLPVRGQKTKNNARTRKGPVKTVANKKK.

This sequence belongs to the universal ribosomal protein uS13 family. In terms of assembly, part of the 30S ribosomal subunit. Forms a loose heterodimer with protein S19. Forms two bridges to the 50S subunit in the 70S ribosome.

Its function is as follows. Located at the top of the head of the 30S subunit, it contacts several helices of the 16S rRNA. In the 70S ribosome it contacts the 23S rRNA (bridge B1a) and protein L5 of the 50S subunit (bridge B1b), connecting the 2 subunits; these bridges are implicated in subunit movement. Contacts the tRNAs in the A and P-sites. The polypeptide is Small ribosomal subunit protein uS13 (Staphylococcus carnosus (strain TM300)).